A 306-amino-acid chain; its full sequence is Elongation factor Ts (306 aa).

The segment at 80 to 83 is involved in Mg(2+) ion dislocation from EF-Tu; it reads TDFV.

It belongs to the EF-Ts family.

The protein resides in the cytoplasm. Associates with the EF-Tu.GDP complex and induces the exchange of GDP to GTP. It remains bound to the aminoacyl-tRNA.EF-Tu.GTP complex up to the GTP hydrolysis stage on the ribosome. In Clostridium acetobutylicum (strain ATCC 824 / DSM 792 / JCM 1419 / IAM 19013 / LMG 5710 / NBRC 13948 / NRRL B-527 / VKM B-1787 / 2291 / W), this protein is Elongation factor Ts.